A 636-amino-acid polypeptide reads, in one-letter code: Transcriptional repressor CTCFL (636 aa).

Disordered stretches follow at residues 17 to 38 (KEQKLKPGDLEEEKEEDGVQRV), 160 to 195 (ENPELTPDLDESTALKKPEEDEKDQLPPQGETDKRE), and 222 to 257 (LEEQQDPPAANQTSVPGAKAAKPKRRRQTKGKPQSF). Over residues 160–170 (ENPELTPDLDE) the composition is skewed to acidic residues. Positions 242–251 (AKPKRRRQTK) are enriched in basic residues. 11 consecutive C2H2-type zinc fingers follow at residues 257–279 (FQCDTCPFTSSKLSTFNRHIKIH), 285–307 (HLCHLCLKAFRTVTLLRNHVNTH), 313–336 (HKCRDCDMAFVTSGELVRHRRYKH), 342–364 (FKCSLCKYASVEASKMKRHIRSH), 370–392 (FQCCQCAYASRDSYKLKRHMRTH), 398–421 (YECPTCHVRFTQSGTMKIHIAQKH), 428–451 (YECPHCATIIARKSDLRVHLRNLH), 458–480 (MKCRYCPAGFHERYALIQHQRTH), 486–508 (FKCKQCDYACKQERCLKAHMRMH), 514–537 (FSCLACNKHFRQKQLLTVHLRKYH), and 546–572 (HLCLKCDKRFSRWSNLQRHRKKCDPEH). Positions 562 to 624 (QRHRKKCDPE…AAGSQSPDHG (63 aa)) are disordered. The span at 568–583 (CDPEHETLAPNKDRRP) shows a compositional bias: basic and acidic residues.

It belongs to the CTCF zinc-finger protein family. As to quaternary structure, interacts with histones, PRMT7 and SETD1A. Interacts (via N-terminus) with BAG6/BAT3. In terms of tissue distribution, testis-specific.

The protein localises to the cytoplasm. It localises to the nucleus. Its function is as follows. Testis-specific DNA binding protein responsible for insulator function, nuclear architecture and transcriptional control, which probably acts by recruiting epigenetic chromatin modifiers. Plays a key role in gene imprinting in male germline, by participating in the establishment of differential methylation at the IGF2/H19 imprinted control region (ICR). Directly binds the unmethylated H19 ICR and recruits the PRMT7 methyltransferase, leading to methylate histone H4 'Arg-3' to form H4R3sme2. This probably leads to recruit de novo DNA methyltransferases at these sites. Seems to act as tumor suppressor. In association with DNMT1 and DNMT3B, involved in activation of BAG1 gene expression by binding to its promoter. Required for dimethylation of H3 lysine 4 (H3K4me2) of MYC and BRCA1 promoters. The polypeptide is Transcriptional repressor CTCFL (Ctcfl) (Mus musculus (Mouse)).